We begin with the raw amino-acid sequence, 331 residues long: Putative NAD(P)H nitroreductase acg (331 aa).

Residues 28–32 (QPWRW) and arginine 316 contribute to the FMN site.

Belongs to the nitroreductase family. FMN serves as cofactor.

The chain is Putative NAD(P)H nitroreductase acg (acg) from Mycobacterium tuberculosis (strain CDC 1551 / Oshkosh).